The following is a 185-amino-acid chain: Translation initiation factor IF-3 (185 aa).

The protein belongs to the IF-3 family. As to quaternary structure, monomer.

The protein localises to the cytoplasm. Functionally, IF-3 binds to the 30S ribosomal subunit and shifts the equilibrium between 70S ribosomes and their 50S and 30S subunits in favor of the free subunits, thus enhancing the availability of 30S subunits on which protein synthesis initiation begins. This is Translation initiation factor IF-3 from Rickettsia prowazekii (strain Madrid E).